The chain runs to 423 residues: D-tagatose-1,6-bisphosphate aldolase subunit GatZ (423 aa).

This sequence belongs to the GatZ/KbaZ family. GatZ subfamily. As to quaternary structure, forms a complex with GatY.

The protein operates within carbohydrate metabolism; D-tagatose 6-phosphate degradation; D-glyceraldehyde 3-phosphate and glycerone phosphate from D-tagatose 6-phosphate: step 2/2. Functionally, component of the tagatose-1,6-bisphosphate aldolase GatYZ that is required for full activity and stability of the Y subunit. Could have a chaperone-like function for the proper and stable folding of GatY. When expressed alone, GatZ does not show any aldolase activity. Is involved in the catabolism of galactitol. In Salmonella gallinarum (strain 287/91 / NCTC 13346), this protein is D-tagatose-1,6-bisphosphate aldolase subunit GatZ.